The chain runs to 136 residues: MKTLWIVAVWLIAVEGNLYQFGRMIWNRTGKLPILSYGSYGCYCGWGGQGPPKDATDRCCLVHDCCYTRVGDCSPKMTLYSYRFENGDIICDNKDPCKRAVCECDREAAICLGENVNTYDKKYKSYEDCTEEVQEC.

The signal sequence occupies residues 1–16 (MKTLWIVAVWLIAVEG). Disulfide bonds link cysteine 42-cysteine 129, cysteine 44-cysteine 60, cysteine 59-cysteine 111, cysteine 65-cysteine 136, cysteine 66-cysteine 104, cysteine 73-cysteine 97, and cysteine 91-cysteine 102. 3 residues coordinate Ca(2+): tyrosine 43, glycine 45, and glycine 47. The active site involves histidine 63. Aspartate 64 contributes to the Ca(2+) binding site. Aspartate 105 is a catalytic residue. Residues 112-133 (LGENVNTYDKKYKSYEDCTEEV) form a may be responsible for inhibition of the platelet-aggregation activity region.

This sequence belongs to the phospholipase A2 family. Group II subfamily. D49 sub-subfamily. As to quaternary structure, monomer. The cofactor is Ca(2+). Expressed by the venom gland.

The protein localises to the secreted. It catalyses the reaction a 1,2-diacyl-sn-glycero-3-phosphocholine + H2O = a 1-acyl-sn-glycero-3-phosphocholine + a fatty acid + H(+). Its function is as follows. Snake venom phospholipase A2 (PLA2) that inhibits human platelet aggregation induced by ADP, collagen and epinephrin (possibly by binding the platelet receptor alpha-IIb/beta-III) and induces mild edema in the foot pads of mice. PLA2 catalyzes the calcium-dependent hydrolysis of the 2-acyl groups in 3-sn-phosphoglycerides. The chain is Acidic phospholipase A2 EC-I from Echis carinatus (Saw-scaled viper).